The sequence spans 270 residues: Small ribosomal subunit protein uS2 (270 aa).

It belongs to the universal ribosomal protein uS2 family. In terms of assembly, component of the small ribosomal subunit. Mature ribosomes consist of a small (40S) and a large (60S) subunit. The 40S subunit contains about 33 different proteins and 1 molecule of RNA (18S). The 60S subunit contains about 49 different proteins and 3 molecules of RNA (28S, 5.8S and 5S). Interacts with oho23B/rpS21.

It is found in the cytoplasm. It localises to the nucleus. In terms of biological role, required for the assembly and/or stability of the 40S ribosomal subunit. Required for the processing of the 20S rRNA-precursor to mature 18S rRNA in a late step of the maturation of 40S ribosomal subunits. Required during oogenesis and imaginal development. The chain is Small ribosomal subunit protein uS2 from Drosophila persimilis (Fruit fly).